A 591-amino-acid chain; its full sequence is V-type ATP synthase alpha chain (591 aa).

233–240 provides a ligand contact to ATP; the sequence is GPFGAGKT.

This sequence belongs to the ATPase alpha/beta chains family.

It catalyses the reaction ATP + H2O + 4 H(+)(in) = ADP + phosphate + 5 H(+)(out). Produces ATP from ADP in the presence of a proton gradient across the membrane. The V-type alpha chain is a catalytic subunit. The protein is V-type ATP synthase alpha chain of Streptococcus pyogenes serotype M49 (strain NZ131).